We begin with the raw amino-acid sequence, 507 residues long: ATP synthase subunit alpha (507 aa).

Residue 168 to 175 coordinates ATP; it reads GDRQTGKT.

This sequence belongs to the ATPase alpha/beta chains family. F-type ATPases have 2 components, CF(1) - the catalytic core - and CF(0) - the membrane proton channel. CF(1) has five subunits: alpha(3), beta(3), gamma(1), delta(1), epsilon(1). CF(0) has three main subunits: a(1), b(2) and c(9-12). The alpha and beta chains form an alternating ring which encloses part of the gamma chain. CF(1) is attached to CF(0) by a central stalk formed by the gamma and epsilon chains, while a peripheral stalk is formed by the delta and b chains.

The protein resides in the cell membrane. It carries out the reaction ATP + H2O + 4 H(+)(in) = ADP + phosphate + 5 H(+)(out). Produces ATP from ADP in the presence of a proton gradient across the membrane. The alpha chain is a regulatory subunit. This is ATP synthase subunit alpha from Mesomycoplasma hyopneumoniae (strain J / ATCC 25934 / NCTC 10110) (Mycoplasma hyopneumoniae).